Reading from the N-terminus, the 150-residue chain is Large ribosomal subunit protein uL13 (150 aa).

The protein belongs to the universal ribosomal protein uL13 family. In terms of assembly, part of the 50S ribosomal subunit.

This protein is one of the early assembly proteins of the 50S ribosomal subunit, although it is not seen to bind rRNA by itself. It is important during the early stages of 50S assembly. This Chlorobium phaeobacteroides (strain BS1) protein is Large ribosomal subunit protein uL13.